A 427-amino-acid polypeptide reads, in one-letter code: MNFSRSADLFKQAQNSIPGGVNSPVRAFKSVGRDPLFIKKASGCKIEDVDGNQFIDFVGSWGPMILGHCHPQVASAVKAAVDSGCSFGAPTELEITLAEMVINAVPSIEMVRMVSSGTEATMSAIRLARGYTGRDKILKFSGCYHGHSDSLLVKAGSGAATFGVPDSPGVPQDFARHTLTADYNSLESVRTLIAENKGQVACIIVEPVAGNMGTVPPREGFLEGLRTLCTQEGIVLIFDEVMSGFRVAYGGAQEVYGVTPDMTTLGKIIGGGLPVGAFGGKKEIMTLLSPSGGVYQAGTLSGNPLAMTAGIETLKLLQAEGFYRNLEEKSSYVAAGIARAAEKAGFPIYSARVGSMFCAFFSKDPVYDWTTAAKCDTEAFAKYFRLMLGEGIYLAPSQYETAFVSIAHATEDLDRTIAAAEKSFRAL.

Lys-267 carries the N6-(pyridoxal phosphate)lysine modification.

Belongs to the class-III pyridoxal-phosphate-dependent aminotransferase family. HemL subfamily. As to quaternary structure, homodimer. Pyridoxal 5'-phosphate serves as cofactor.

The protein resides in the cytoplasm. The enzyme catalyses (S)-4-amino-5-oxopentanoate = 5-aminolevulinate. The protein operates within porphyrin-containing compound metabolism; protoporphyrin-IX biosynthesis; 5-aminolevulinate from L-glutamyl-tRNA(Glu): step 2/2. The sequence is that of Glutamate-1-semialdehyde 2,1-aminomutase from Geotalea daltonii (strain DSM 22248 / JCM 15807 / FRC-32) (Geobacter daltonii).